The primary structure comprises 261 residues: Cytochrome c oxidase subunit 3 (261 aa).

Topologically, residues 1–15 are mitochondrial matrix; it reads MAHQAHAYHMVDPSP. The helical transmembrane segment at 16–34 threads the bilayer; sequence WPLTGAVAALLLTSGLAIW. At 35 to 40 the chain is on the mitochondrial intermembrane side; the sequence is FPFNSL. A helical membrane pass occupies residues 41-66; it reads ILLTLGLVLLLLTMYQWWRDIVREGT. Residues 67-72 lie on the Mitochondrial matrix side of the membrane; it reads FQGHHT. The helical transmembrane segment at 73–105 threads the bilayer; it reads PPVQKGLRYGMILFITSEVFFFLGFFWAFYHSS. The Mitochondrial intermembrane portion of the chain corresponds to 106–128; the sequence is LAPTPELGGCWPPTGIVPLNPFE. A helical transmembrane segment spans residues 129–152; that stretch reads VPLLNTAVLLASGVTVTWAHHSIM. The Mitochondrial matrix segment spans residues 153–155; the sequence is EGE. Residues 156 to 183 form a helical membrane-spanning segment; the sequence is RKQAIHSLTLTILLGFYFTFLQAMEYYE. Residues 184–190 lie on the Mitochondrial intermembrane side of the membrane; it reads APFTIAD. Residues 191–223 traverse the membrane as a helical segment; the sequence is GVYGSTFFVATGFHGLHVIIGSTFLAICLLRQI. Topologically, residues 224 to 232 are mitochondrial matrix; sequence RYHFTSEHH. Residues 233–256 form a helical membrane-spanning segment; it reads FGFEAAAWYWHFVDVVWLFLYISI. Over 257–261 the chain is Mitochondrial intermembrane; it reads YWWGS.

It belongs to the cytochrome c oxidase subunit 3 family. As to quaternary structure, component of the cytochrome c oxidase (complex IV, CIV), a multisubunit enzyme composed of 14 subunits. The complex is composed of a catalytic core of 3 subunits MT-CO1, MT-CO2 and MT-CO3, encoded in the mitochondrial DNA, and 11 supernumerary subunits COX4I, COX5A, COX5B, COX6A, COX6B, COX6C, COX7A, COX7B, COX7C, COX8 and NDUFA4, which are encoded in the nuclear genome. The complex exists as a monomer or a dimer and forms supercomplexes (SCs) in the inner mitochondrial membrane with NADH-ubiquinone oxidoreductase (complex I, CI) and ubiquinol-cytochrome c oxidoreductase (cytochrome b-c1 complex, complex III, CIII), resulting in different assemblies (supercomplex SCI(1)III(2)IV(1) and megacomplex MCI(2)III(2)IV(2)).

The protein resides in the mitochondrion inner membrane. The catalysed reaction is 4 Fe(II)-[cytochrome c] + O2 + 8 H(+)(in) = 4 Fe(III)-[cytochrome c] + 2 H2O + 4 H(+)(out). Functionally, component of the cytochrome c oxidase, the last enzyme in the mitochondrial electron transport chain which drives oxidative phosphorylation. The respiratory chain contains 3 multisubunit complexes succinate dehydrogenase (complex II, CII), ubiquinol-cytochrome c oxidoreductase (cytochrome b-c1 complex, complex III, CIII) and cytochrome c oxidase (complex IV, CIV), that cooperate to transfer electrons derived from NADH and succinate to molecular oxygen, creating an electrochemical gradient over the inner membrane that drives transmembrane transport and the ATP synthase. Cytochrome c oxidase is the component of the respiratory chain that catalyzes the reduction of oxygen to water. Electrons originating from reduced cytochrome c in the intermembrane space (IMS) are transferred via the dinuclear copper A center (CU(A)) of subunit 2 and heme A of subunit 1 to the active site in subunit 1, a binuclear center (BNC) formed by heme A3 and copper B (CU(B)). The BNC reduces molecular oxygen to 2 water molecules using 4 electrons from cytochrome c in the IMS and 4 protons from the mitochondrial matrix. This Tetraodon nigroviridis (Spotted green pufferfish) protein is Cytochrome c oxidase subunit 3 (mt-co3).